A 278-amino-acid chain; its full sequence is MSISPQEVKKLRDATGAGFGDCKKALSVAGGDFELAKKKLKEMGIVSADKRSGRDAKEGRVFSYVNTERVGLLLIACETDFVAMNSDFVAFGNSLIKQLVESGRDILDEHQELEIKNLAATIKENIYVSKVYISNIASNELVKNYLHGDHSKIGVFVKFKIDDVLKMQDEKLNNFAMDLALHVAAFSPLYLSVNDICLNYIKEQEEIFMRQMESSGKPENVVKGIISGKLKKHLGEIALLEQGFVKDDKLTVKEKIEEVSKLILSKIEVVEFKYLSVG.

The interval 79 to 82 (TDFV) is involved in Mg(2+) ion dislocation from EF-Tu.

The protein belongs to the EF-Ts family.

It localises to the cytoplasm. Functionally, associates with the EF-Tu.GDP complex and induces the exchange of GDP to GTP. It remains bound to the aminoacyl-tRNA.EF-Tu.GTP complex up to the GTP hydrolysis stage on the ribosome. In Borrelia duttonii (strain Ly), this protein is Elongation factor Ts.